The chain runs to 97 residues: Protein RnfH (97 aa).

It belongs to the UPF0125 (RnfH) family.

This is Protein RnfH from Proteus mirabilis (strain HI4320).